The chain runs to 101 residues: RTVGELIQNQIRVGLSRMERVVRERMTTQDVEAITPQTLINIRPVVAAIKEFFGTSQLSQFMDQNNPLSGLTHKRRLSALGPGGLSRERAGLEVRDVHSSH.

A disordered region spans residues 74 to 101; the sequence is KRRLSALGPGGLSRERAGLEVRDVHSSH. Positions 86–101 are enriched in basic and acidic residues; the sequence is SRERAGLEVRDVHSSH.

This sequence belongs to the RNA polymerase beta chain family. As to quaternary structure, the RNAP catalytic core consists of 2 alpha, 1 beta, 1 beta' and 1 omega subunit. When a sigma factor is associated with the core the holoenzyme is formed, which can initiate transcription.

The enzyme catalyses RNA(n) + a ribonucleoside 5'-triphosphate = RNA(n+1) + diphosphate. Functionally, DNA-dependent RNA polymerase catalyzes the transcription of DNA into RNA using the four ribonucleoside triphosphates as substrates. The polypeptide is DNA-directed RNA polymerase subunit beta (rpoB) (Mycolicibacterium peregrinum (Mycobacterium peregrinum)).